The following is a 375-amino-acid chain: Adiponectin receptor protein 1 (375 aa).

Residues 1 to 60 are disordered; the sequence is MSSHKGSAGAQGNGAPSGNREADTVELAELGPLLEEKGKRAASSPAKAEEDQACPVPQEE. Residues 1 to 136 are Cytoplasmic-facing; it reads MSSHKGSAGA…SIFRIHTETG (136 aa). The helical transmembrane segment at 137-157 threads the bilayer; sequence NIWTHLLGFVLFLFLGILTML. Topologically, residues 158-170 are extracellular; it reads RPNMYFMAPLQEK. Residues 171 to 191 traverse the membrane as a helical segment; it reads VVFGMFFLGAVLCLSFSWLFH. Zn(2+) is bound at residue His-191. Over 192-203 the chain is Cytoplasmic; that stretch reads TVYCHSEKVSRT. The chain crosses the membrane as a helical span at residues 204–224; the sequence is FSKLDYSGIALLIMGSFVPWL. Residues 225–234 lie on the Extracellular side of the membrane; that stretch reads YYSFYCSPQP. The chain crosses the membrane as a helical span at residues 235–255; the sequence is RLIYLSIVCVLGISAIIVAQW. Over 256 to 264 the chain is Cytoplasmic; sequence DRFATPKHR. A helical membrane pass occupies residues 265–285; that stretch reads QTRAGVFLGLGLSGVVPTMHF. At 286–298 the chain is on the extracellular side; it reads TIAEGFVKATTVG. The helical transmembrane segment at 299 to 319 threads the bilayer; the sequence is QMGWFFLMAVMYITGAGLYAA. Over 320-337 the chain is Cytoplasmic; the sequence is RIPERFFPGKFDIWFQSH. Positions 337 and 341 each coordinate Zn(2+). A helical membrane pass occupies residues 338–358; that stretch reads QIFHVLVVAAAFVHFYGVSNL. The Extracellular segment spans residues 359–375; it reads QEFRYGLEGGCTDDSLL.

It belongs to the ADIPOR family. In terms of assembly, may form homooligomers and heterooligomers with ADIPOR2. Interacts with APPL2 (via BAR domain); hinders the accessibility of APPL1 to ADIPOR1; negatively regulates adiponectin signaling; ADIPOQ dissociates this interaction and facilitates the recruitment of APPL1 to ADIPOR1. Interacts with APPL1; ADIPOQ enhances this interaction; inhibites adiponectin-stimulated binding of APPL2 to ADIPOR1. Detected in brain and quadriceps muscle (at protein level). Widely expressed. Expressed in heart, kidney, liver, lung, skeletal muscle, white adipose tissue, brown adipose tissue, aorta and spleen. Weakly expressed in brain and testis.

The protein localises to the cell membrane. Functionally, receptor for ADIPOQ, an essential hormone secreted by adipocytes that regulates glucose and lipid metabolism. Required for normal glucose and fat homeostasis and for maintaining a normal body weight. ADIPOQ-binding activates a signaling cascade that leads to increased AMPK activity, and ultimately to increased fatty acid oxidation, increased glucose uptake and decreased gluconeogenesis. Has high affinity for globular adiponectin and low affinity for full-length adiponectin. The polypeptide is Adiponectin receptor protein 1 (Mus musculus (Mouse)).